The following is a 495-amino-acid chain: Ankyrin repeat domain-containing protein 34A (495 aa).

ANK repeat units lie at residues 4–33 (TEGH…YVNE), 37–72 (QGET…DPNI), 76–106 (LGRT…DPSV), and 110–139 (AGAS…AKGT). Glutamine 15 bears the N5-methylglutamine mark. 2 stretches are compositionally biased toward polar residues: residues 147–162 (DTSP…YLNS) and 180–191 (VCTSPSEVQLQT). The tract at residues 147-495 (DTSPSGTKKT…SLGGPGEPGR (349 aa)) is disordered. Positions 203–213 (AQEEEEKRDVF) are enriched in basic and acidic residues. Residues 223 to 232 (DPSPSEPLPK) are compositionally biased toward pro residues. Residues 233 to 242 (PPRHPPKPLK) show a composition bias toward basic residues. At threonine 315 the chain carries Phosphothreonine. The segment covering 375–385 (SVSSPRQSQES) has biased composition (polar residues). Residues 462–472 (RTKRKLVRRHS) are compositionally biased toward basic residues. The segment covering 485 to 495 (QSLGGPGEPGR) has biased composition (gly residues).

It belongs to the ANKRD34 family. Methylated at Gln-15 by N6AMT1.

In Rattus norvegicus (Rat), this protein is Ankyrin repeat domain-containing protein 34A (Ankrd34a).